A 238-amino-acid chain; its full sequence is Oil body-associated protein 1A (238 aa).

The protein belongs to the OBAP family. As to expression, expressed in seeds, but not in leaves or roots. Highest expression in scutellum. Detected in embryo axis and endosperm.

The protein resides in the lipid droplet. The sequence is that of Oil body-associated protein 1A from Zea mays (Maize).